We begin with the raw amino-acid sequence, 452 residues long: Bifunctional protein GlmU (452 aa).

Residues Met1–Arg232 form a pyrophosphorylase region. UDP-N-acetyl-alpha-D-glucosamine is bound by residues Leu11–Gly14, Lys25, Gln78, and Gly83–Thr84. Mg(2+) is bound at residue Asp108. 3 residues coordinate UDP-N-acetyl-alpha-D-glucosamine: Gly144, Glu158, and Asn230. Asn230 lines the Mg(2+) pocket. The tract at residues Ala233–Gly253 is linker. The N-acetyltransferase stretch occupies residues Gly254–Glu452. Arg319 and Lys337 together coordinate UDP-N-acetyl-alpha-D-glucosamine. His349 acts as the Proton acceptor in catalysis. UDP-N-acetyl-alpha-D-glucosamine-binding residues include Tyr352 and Asn363. Residues Ala366, Asn372–Tyr373, Ser391, Ser409, and Arg426 contribute to the acetyl-CoA site.

This sequence in the N-terminal section; belongs to the N-acetylglucosamine-1-phosphate uridyltransferase family. It in the C-terminal section; belongs to the transferase hexapeptide repeat family. As to quaternary structure, homotrimer. Mg(2+) serves as cofactor.

It is found in the cytoplasm. The catalysed reaction is alpha-D-glucosamine 1-phosphate + acetyl-CoA = N-acetyl-alpha-D-glucosamine 1-phosphate + CoA + H(+). It catalyses the reaction N-acetyl-alpha-D-glucosamine 1-phosphate + UTP + H(+) = UDP-N-acetyl-alpha-D-glucosamine + diphosphate. Its pathway is nucleotide-sugar biosynthesis; UDP-N-acetyl-alpha-D-glucosamine biosynthesis; N-acetyl-alpha-D-glucosamine 1-phosphate from alpha-D-glucosamine 6-phosphate (route II): step 2/2. It participates in nucleotide-sugar biosynthesis; UDP-N-acetyl-alpha-D-glucosamine biosynthesis; UDP-N-acetyl-alpha-D-glucosamine from N-acetyl-alpha-D-glucosamine 1-phosphate: step 1/1. The protein operates within bacterial outer membrane biogenesis; LPS lipid A biosynthesis. Functionally, catalyzes the last two sequential reactions in the de novo biosynthetic pathway for UDP-N-acetylglucosamine (UDP-GlcNAc). The C-terminal domain catalyzes the transfer of acetyl group from acetyl coenzyme A to glucosamine-1-phosphate (GlcN-1-P) to produce N-acetylglucosamine-1-phosphate (GlcNAc-1-P), which is converted into UDP-GlcNAc by the transfer of uridine 5-monophosphate (from uridine 5-triphosphate), a reaction catalyzed by the N-terminal domain. This chain is Bifunctional protein GlmU, found in Parvibaculum lavamentivorans (strain DS-1 / DSM 13023 / NCIMB 13966).